The sequence spans 343 residues: ATP-dependent (S)-NAD(P)H-hydrate dehydratase (343 aa).

Residues 1–42 (MAVCPYGAAAVVMALLSAAIAFHCSPLLAVLQRALSLHTAHA) constitute a mitochondrion transit peptide. In terms of domain architecture, YjeF C-terminal spans 49–340 (LFQLVRNIVP…AEVGAAFSKL (292 aa)). Lys63 is modified (N6-acetyllysine). At Tyr81 the chain carries Phosphotyrosine. Residues Gly149 and 202–208 (NHVEFSR) contribute to the (6S)-NADPHX site. Residues 242–246 (KGEQD) and 261–270 (GSSRRCGGQG) each bind ATP. Asp271 serves as a coordination point for (6S)-NADPHX.

It belongs to the NnrD/CARKD family. Mg(2+) serves as cofactor.

It is found in the mitochondrion. The catalysed reaction is (6S)-NADHX + ATP = ADP + phosphate + NADH + H(+). The enzyme catalyses (6S)-NADPHX + ATP = ADP + phosphate + NADPH + H(+). Its function is as follows. Catalyzes the dehydration of the S-form of NAD(P)HX at the expense of ATP, which is converted to ADP. Together with NAD(P)HX epimerase, which catalyzes the epimerization of the S- and R-forms, the enzyme allows the repair of both epimers of NAD(P)HX, a damaged form of NAD(P)H that is a result of enzymatic or heat-dependent hydration. This chain is ATP-dependent (S)-NAD(P)H-hydrate dehydratase, found in Rattus norvegicus (Rat).